The primary structure comprises 461 residues: Bifunctional protein GlmU (461 aa).

A pyrophosphorylase region spans residues 1 to 229; that stretch reads MEKYVVVLAA…FSESLGVNDR (229 aa). UDP-N-acetyl-alpha-D-glucosamine contacts are provided by residues 8 to 11, lysine 22, glutamine 72, and 77 to 78; these read LAAG and GT. Residue aspartate 102 coordinates Mg(2+). 4 residues coordinate UDP-N-acetyl-alpha-D-glucosamine: glycine 139, glutamate 154, asparagine 169, and asparagine 227. Asparagine 227 is a binding site for Mg(2+). The tract at residues 230–250 is linker; the sequence is VALAQATKTMQRRINEAHMRD. The interval 251 to 461 is N-acetyltransferase; sequence GVSFIDPDTA…LPLSKDKDWE (211 aa). 2 residues coordinate UDP-N-acetyl-alpha-D-glucosamine: arginine 332 and lysine 350. The active-site Proton acceptor is the histidine 362. UDP-N-acetyl-alpha-D-glucosamine-binding residues include tyrosine 365 and asparagine 376. Acetyl-CoA contacts are provided by residues 385 to 386, alanine 422, and arginine 439; that span reads NY.

It in the N-terminal section; belongs to the N-acetylglucosamine-1-phosphate uridyltransferase family. This sequence in the C-terminal section; belongs to the transferase hexapeptide repeat family. In terms of assembly, homotrimer. Requires Mg(2+) as cofactor.

It is found in the cytoplasm. The catalysed reaction is alpha-D-glucosamine 1-phosphate + acetyl-CoA = N-acetyl-alpha-D-glucosamine 1-phosphate + CoA + H(+). It catalyses the reaction N-acetyl-alpha-D-glucosamine 1-phosphate + UTP + H(+) = UDP-N-acetyl-alpha-D-glucosamine + diphosphate. It functions in the pathway nucleotide-sugar biosynthesis; UDP-N-acetyl-alpha-D-glucosamine biosynthesis; N-acetyl-alpha-D-glucosamine 1-phosphate from alpha-D-glucosamine 6-phosphate (route II): step 2/2. Its pathway is nucleotide-sugar biosynthesis; UDP-N-acetyl-alpha-D-glucosamine biosynthesis; UDP-N-acetyl-alpha-D-glucosamine from N-acetyl-alpha-D-glucosamine 1-phosphate: step 1/1. The protein operates within bacterial outer membrane biogenesis; LPS lipid A biosynthesis. Its function is as follows. Catalyzes the last two sequential reactions in the de novo biosynthetic pathway for UDP-N-acetylglucosamine (UDP-GlcNAc). The C-terminal domain catalyzes the transfer of acetyl group from acetyl coenzyme A to glucosamine-1-phosphate (GlcN-1-P) to produce N-acetylglucosamine-1-phosphate (GlcNAc-1-P), which is converted into UDP-GlcNAc by the transfer of uridine 5-monophosphate (from uridine 5-triphosphate), a reaction catalyzed by the N-terminal domain. This is Bifunctional protein GlmU from Lactobacillus helveticus (strain DPC 4571).